The primary structure comprises 756 residues: 5-methyltetrahydropteroyltriglutamate--homocysteine methyltransferase (756 aa).

5-methyltetrahydropteroyltri-L-glutamate contacts are provided by residues 20–23 (RELK) and Lys-114. Residues 433–435 (IGS) and Glu-486 each bind L-homocysteine. L-methionine is bound by residues 433-435 (IGS) and Glu-486. 5-methyltetrahydropteroyltri-L-glutamate-binding positions include 517 to 518 (RC) and Trp-563. Asp-601 is a binding site for L-homocysteine. Asp-601 contributes to the L-methionine binding site. A 5-methyltetrahydropteroyltri-L-glutamate-binding site is contributed by Glu-607. His-643, Cys-645, and Glu-667 together coordinate Zn(2+). The active-site Proton donor is His-696. Position 728 (Cys-728) interacts with Zn(2+).

This sequence belongs to the vitamin-B12 independent methionine synthase family. The cofactor is Zn(2+).

The enzyme catalyses 5-methyltetrahydropteroyltri-L-glutamate + L-homocysteine = tetrahydropteroyltri-L-glutamate + L-methionine. It functions in the pathway amino-acid biosynthesis; L-methionine biosynthesis via de novo pathway; L-methionine from L-homocysteine (MetE route): step 1/1. Its function is as follows. Catalyzes the transfer of a methyl group from 5-methyltetrahydrofolate to homocysteine resulting in methionine formation. The polypeptide is 5-methyltetrahydropteroyltriglutamate--homocysteine methyltransferase (Mycolicibacterium paratuberculosis (strain ATCC BAA-968 / K-10) (Mycobacterium paratuberculosis)).